We begin with the raw amino-acid sequence, 493 residues long: Ketol-acid reductoisomerase (NADP(+)) (493 aa).

Positions 14–208 (LDQLGRCRFM…GGDRAGVLES (195 aa)) constitute a KARI N-terminal Rossmann domain. Residues 45-48 (CGAQ), Arg-68, Arg-76, Ser-78, and 108-110 (DKQ) each bind NADP(+). His-132 is a catalytic residue. Gly-158 contributes to the NADP(+) binding site. 2 KARI C-terminal knotted domains span residues 209-345 (SFVA…SPKA) and 346-486 (DGIK…MTDM). 4 residues coordinate Mg(2+): Asp-217, Glu-221, Glu-390, and Glu-394. A substrate-binding site is contributed by Ser-415.

This sequence belongs to the ketol-acid reductoisomerase family. Mg(2+) is required as a cofactor.

The catalysed reaction is (2R)-2,3-dihydroxy-3-methylbutanoate + NADP(+) = (2S)-2-acetolactate + NADPH + H(+). The enzyme catalyses (2R,3R)-2,3-dihydroxy-3-methylpentanoate + NADP(+) = (S)-2-ethyl-2-hydroxy-3-oxobutanoate + NADPH + H(+). It participates in amino-acid biosynthesis; L-isoleucine biosynthesis; L-isoleucine from 2-oxobutanoate: step 2/4. Its pathway is amino-acid biosynthesis; L-valine biosynthesis; L-valine from pyruvate: step 2/4. In terms of biological role, involved in the biosynthesis of branched-chain amino acids (BCAA). Catalyzes an alkyl-migration followed by a ketol-acid reduction of (S)-2-acetolactate (S2AL) to yield (R)-2,3-dihydroxy-isovalerate. In the isomerase reaction, S2AL is rearranged via a Mg-dependent methyl migration to produce 3-hydroxy-3-methyl-2-ketobutyrate (HMKB). In the reductase reaction, this 2-ketoacid undergoes a metal-dependent reduction by NADPH to yield (R)-2,3-dihydroxy-isovalerate. This chain is Ketol-acid reductoisomerase (NADP(+)), found in Actinobacillus pleuropneumoniae serotype 3 (strain JL03).